Reading from the N-terminus, the 423-residue chain is Proline racemase A (423 aa).

Residues 1–31 (MRKSVCPKQKFFFSAFPFFFFFCVFPLISRT) form the signal peptide. Residue Cys160 is the Proton acceptor of the active site. 161-162 (GH) serves as a coordination point for substrate. Asn213, Asn266, and Asn282 each carry an N-linked (GlcNAc...) asparagine glycan. Asp326 is a substrate binding site. Cys330 serves as the catalytic Proton donor. A substrate-binding site is contributed by 331–332 (GT).

Belongs to the proline racemase family. In terms of assembly, homodimer.

It is found in the secreted. The protein localises to the membrane. It localises to the cytoplasm. The catalysed reaction is L-proline = D-proline. Inhibited by maleic acid, iodoacetamide, iodoacetate and, most particularly, pyrrole-2-carboxylic acid. Functionally, catalyzes the interconversion of L- and D-proline. Secreted isoform 1 contributes to parasite immune evasion by acting as a B-cell mitogen. Probably involved in parasite differentiation and infectivity. The protein is Proline racemase A (PA45-A) of Trypanosoma cruzi (strain CL Brener).